The sequence spans 261 residues: GTP cyclohydrolase FolE2 (261 aa).

The protein belongs to the GTP cyclohydrolase IV family.

It carries out the reaction GTP + H2O = 7,8-dihydroneopterin 3'-triphosphate + formate + H(+). The protein operates within cofactor biosynthesis; 7,8-dihydroneopterin triphosphate biosynthesis; 7,8-dihydroneopterin triphosphate from GTP: step 1/1. Converts GTP to 7,8-dihydroneopterin triphosphate. The protein is GTP cyclohydrolase FolE2 of Geobacter metallireducens (strain ATCC 53774 / DSM 7210 / GS-15).